Consider the following 831-residue polypeptide: Heat shock 70 kDa protein 14 (831 aa).

2 disordered regions span residues 503–579 (EEVE…KKKV) and 786–831 (TKPK…EGST). Residues 509–526 (VTKEHSEETTKMDSDKAS) show a composition bias toward basic and acidic residues. A Phosphoserine modification is found at Ser-533.

Belongs to the heat shock protein 70 (TC 1.A.33) family. HSP110/SSE subfamily. As to quaternary structure, interacts with HTT1 in both cytoplasm and nucleus. Constitutively expressed.

The protein localises to the cytoplasm. Its subcellular location is the nucleus. In cooperation with other chaperones, Hsp70s are key components that facilitate folding of de novo synthesized proteins, assist translocation of precursor proteins into organelles, and are responsible for degradation of damaged protein under stress conditions. The sequence is that of Heat shock 70 kDa protein 14 (HSP70-14) from Arabidopsis thaliana (Mouse-ear cress).